We begin with the raw amino-acid sequence, 363 residues long: Translocating chain-associated membrane protein 1-like 1 (363 aa).

Residues 1–29 (MGLRKKNARNPPVLSHEFMVQNHADMVSC) are Cytoplasmic-facing. A helical membrane pass occupies residues 30-50 (VGMFFVLGLMFEGTSEMSIAF). Residues 51 to 80 (LTLQHGVVVPAEGLPSGSRTLYHYGVKDLA) are Lumenal-facing. A helical transmembrane segment spans residues 81–101 (TVFFYMLVAIIIHATIQEYVL). At 102-120 (DKLSRRLQLTKGKQNKLNE) the chain is on the cytoplasmic side. Residues 116 to 324 (NKLNEAGQLS…TVWLQRWLED (209 aa)) form the TLC domain. A helical transmembrane segment spans residues 121–141 (AGQLSVFYIVSGIWGMIILAS). The Lumenal segment spans residues 142–159 (ENCLSDPTLLWKSQPHNM). Residues 160-179 (MTFQMKFFYISQLAYWFHSF) form a helical membrane-spanning segment. Residues 180 to 191 (PELYFQKVRKQD) lie on the Cytoplasmic side of the membrane. The chain crosses the membrane as a helical span at residues 192 to 214 (IPGQLIYIGLHLFHIGGAYLLYL). Over 215-218 (NHLG) the chain is Lumenal. Residues 219–241 (LLLLMLHYAVELLSSVCSLLYFG) traverse the membrane as a helical segment. Residues 242–250 (DERYQKGLS) lie on the Cytoplasmic side of the membrane. The chain crosses the membrane as a helical span at residues 251-271 (LWPIVFISGRLVTLIVSVVTV). The Lumenal portion of the chain corresponds to 272–295 (GLHLAGTNRNGNALSGNVNVLAAK). The helical transmembrane segment at 296–316 (IAVLSSSCSIQVYITWTLTTV) threads the bilayer. The Cytoplasmic segment spans residues 317–363 (WLQRWLEDANLHVCGRKRRSRARKGTENGVENPNRIDSPPKKKEKAP). The interval 338 to 363 (ARKGTENGVENPNRIDSPPKKKEKAP) is disordered. The span at 354–363 (SPPKKKEKAP) shows a compositional bias: basic and acidic residues.

It belongs to the TRAM family.

It localises to the endoplasmic reticulum membrane. In terms of biological role, stimulatory or required for the translocation of secretory proteins across the ER membrane. This is Translocating chain-associated membrane protein 1-like 1 (Tram1l1) from Mus musculus (Mouse).